Here is a 388-residue protein sequence, read N- to C-terminus: Succinate--CoA ligase [ADP-forming] subunit beta (388 aa).

In terms of domain architecture, ATP-grasp spans 9–244 (KQLFAEYGLP…PSQDDPREAH (236 aa)). ATP contacts are provided by residues K46, 53 to 55 (GRG), E99, T102, and E107. Positions 199 and 213 each coordinate Mg(2+). Residues N264 and 321–323 (GIV) contribute to the substrate site.

The protein belongs to the succinate/malate CoA ligase beta subunit family. Heterotetramer of two alpha and two beta subunits. Requires Mg(2+) as cofactor.

It carries out the reaction succinate + ATP + CoA = succinyl-CoA + ADP + phosphate. The enzyme catalyses GTP + succinate + CoA = succinyl-CoA + GDP + phosphate. It participates in carbohydrate metabolism; tricarboxylic acid cycle; succinate from succinyl-CoA (ligase route): step 1/1. Succinyl-CoA synthetase functions in the citric acid cycle (TCA), coupling the hydrolysis of succinyl-CoA to the synthesis of either ATP or GTP and thus represents the only step of substrate-level phosphorylation in the TCA. The beta subunit provides nucleotide specificity of the enzyme and binds the substrate succinate, while the binding sites for coenzyme A and phosphate are found in the alpha subunit. The chain is Succinate--CoA ligase [ADP-forming] subunit beta from Pseudomonas fluorescens (strain ATCC BAA-477 / NRRL B-23932 / Pf-5).